The following is a 206-amino-acid chain: Triosephosphate isomerase (206 aa).

H76 acts as the Electrophile in catalysis. The active-site Proton acceptor is E146.

It belongs to the triosephosphate isomerase family. As to quaternary structure, homodimer.

The catalysed reaction is D-glyceraldehyde 3-phosphate = dihydroxyacetone phosphate. Its pathway is carbohydrate biosynthesis; gluconeogenesis. It functions in the pathway carbohydrate degradation; glycolysis; D-glyceraldehyde 3-phosphate from glycerone phosphate: step 1/1. This is Triosephosphate isomerase (Tpi) from Anopheles merus (Mosquito).